A 186-amino-acid polypeptide reads, in one-letter code: Ran guanine nucleotide release factor (186 aa).

Residues 27 to 70 are interaction with RAN; sequence DLRPVPDHQEVFCHRVTDQSLIVELLELQAHVQGEEAARYHFED.

This sequence belongs to the MOG1 family. Monomer. Interacts with RAN, both RAN-GTP and RAN-GDP. Competes with RCC1 for a common binding site on RAN and thereby inhibits RCC1-mediated nucleotide exchange. Forms a complex with RAN-GTP and RANBP1. Interacts with the cytoplasmic loop 2 of SCN5A.

The protein localises to the nucleus. It is found in the cytoplasm. Its subcellular location is the perinuclear region. It localises to the cell membrane. Functionally, may regulate the intracellular trafficking of RAN. Promotes guanine nucleotide release from RAN and inhibits binding of new GTP by preventing the binding of the RAN guanine nucleotide exchange factor RCC1. Regulates the levels of GTP-bound RAN in the nucleus, and thereby plays a role in the regulation of RAN-dependent mitotic spindle dynamics. Enhances the expression of SCN5A at the cell membrane in cardiomyocytes. The chain is Ran guanine nucleotide release factor (RANGRF) from Bos taurus (Bovine).